An 858-amino-acid polypeptide reads, in one-letter code: Bifunctional uridylyltransferase/uridylyl-removing enzyme (858 aa).

Positions 1-324 are uridylyltransferase; sequence MSAHAAPSPE…PATSGITRVL (324 aa). The interval 325-681 is uridylyl-removing; it reads SADRFVEKQG…ARPSPIGDAL (357 aa). In terms of domain architecture, HD spans 443 to 565; sequence VDQHILMVLR…VGNERYLTAL (123 aa). ACT domains follow at residues 682 to 763 and 790 to 858; these read QVLV…PSKG and ILSV…AIAV.

Belongs to the GlnD family. Mg(2+) serves as cofactor.

The catalysed reaction is [protein-PII]-L-tyrosine + UTP = [protein-PII]-uridylyl-L-tyrosine + diphosphate. The enzyme catalyses [protein-PII]-uridylyl-L-tyrosine + H2O = [protein-PII]-L-tyrosine + UMP + H(+). Its activity is regulated as follows. Uridylyltransferase (UTase) activity is inhibited by glutamine, while glutamine activates uridylyl-removing (UR) activity. In terms of biological role, modifies, by uridylylation and deuridylylation, the PII regulatory proteins (GlnB and homologs), in response to the nitrogen status of the cell that GlnD senses through the glutamine level. Under low glutamine levels, catalyzes the conversion of the PII proteins and UTP to PII-UMP and PPi, while under higher glutamine levels, GlnD hydrolyzes PII-UMP to PII and UMP (deuridylylation). Thus, controls uridylylation state and activity of the PII proteins, and plays an important role in the regulation of nitrogen assimilation and metabolism. This chain is Bifunctional uridylyltransferase/uridylyl-removing enzyme, found in Burkholderia orbicola (strain MC0-3).